The sequence spans 901 residues: Mediator of RNA polymerase II transcription subunit 14 (901 aa).

Belongs to the Mediator complex subunit 14 family. As to quaternary structure, component of the Mediator complex.

It localises to the nucleus. Functionally, component of the Mediator complex, a coactivator involved in the regulated transcription of nearly all RNA polymerase II-dependent genes. Mediator functions as a bridge to convey information from gene-specific regulatory proteins to the basal RNA polymerase II transcription machinery. Mediator is recruited to promoters by direct interactions with regulatory proteins and serves as a scaffold for the assembly of a functional preinitiation complex with RNA polymerase II and the general transcription factors. In Yarrowia lipolytica (strain CLIB 122 / E 150) (Yeast), this protein is Mediator of RNA polymerase II transcription subunit 14 (RGR1).